We begin with the raw amino-acid sequence, 251 residues long: Cell division protein ZapD (251 aa).

It belongs to the ZapD family. Interacts with FtsZ.

The protein localises to the cytoplasm. In terms of biological role, cell division factor that enhances FtsZ-ring assembly. Directly interacts with FtsZ and promotes bundling of FtsZ protofilaments, with a reduction in FtsZ GTPase activity. This Janthinobacterium sp. (strain Marseille) (Minibacterium massiliensis) protein is Cell division protein ZapD.